The chain runs to 229 residues: Peptide methionine sulfoxide reductase B3, chloroplastic (229 aa).

The N-terminal 71 residues, methionine 1 to cysteine 71, are a transit peptide targeting the chloroplast. A MsrB domain is found at glutamate 102–alanine 223. Zn(2+)-binding residues include cysteine 141, cysteine 144, cysteine 187, and cysteine 190. A disulfide bridge links cysteine 159 with cysteine 212. Cysteine 212 serves as the catalytic Nucleophile.

It belongs to the MsrB Met sulfoxide reductase family. Requires Zn(2+) as cofactor.

The protein resides in the plastid. The protein localises to the chloroplast. It catalyses the reaction L-methionyl-[protein] + [thioredoxin]-disulfide + H2O = L-methionyl-(R)-S-oxide-[protein] + [thioredoxin]-dithiol. Functionally, catalyzes the reduction of methionine sulfoxide (MetSO) to methionine in proteins. Plays a protective role against oxidative stress by restoring activity to proteins that have been inactivated by methionine oxidation. MSRB family specifically reduces the MetSO R-enantiomer. This Oryza sativa subsp. japonica (Rice) protein is Peptide methionine sulfoxide reductase B3, chloroplastic (MSRB3).